A 433-amino-acid chain; its full sequence is Serine hydroxymethyltransferase (433 aa).

(6S)-5,6,7,8-tetrahydrofolate contacts are provided by residues leucine 132 and 136-138 (GHL). An N6-(pyridoxal phosphate)lysine modification is found at lysine 241.

This sequence belongs to the SHMT family. As to quaternary structure, homodimer. Pyridoxal 5'-phosphate serves as cofactor.

It localises to the cytoplasm. The catalysed reaction is (6R)-5,10-methylene-5,6,7,8-tetrahydrofolate + glycine + H2O = (6S)-5,6,7,8-tetrahydrofolate + L-serine. It functions in the pathway one-carbon metabolism; tetrahydrofolate interconversion. Its pathway is amino-acid biosynthesis; glycine biosynthesis; glycine from L-serine: step 1/1. Catalyzes the reversible interconversion of serine and glycine with tetrahydrofolate (THF) serving as the one-carbon carrier. This reaction serves as the major source of one-carbon groups required for the biosynthesis of purines, thymidylate, methionine, and other important biomolecules. Also exhibits THF-independent aldolase activity toward beta-hydroxyamino acids, producing glycine and aldehydes, via a retro-aldol mechanism. The polypeptide is Serine hydroxymethyltransferase (Methylobacterium sp. (strain 4-46)).